Consider the following 528-residue polypeptide: Glucose-6-phosphate isomerase (528 aa).

The Proton donor role is filled by Glu322. Catalysis depends on residues His351 and Lys455.

Belongs to the GPI family.

The protein localises to the cytoplasm. The catalysed reaction is alpha-D-glucose 6-phosphate = beta-D-fructose 6-phosphate. It functions in the pathway carbohydrate biosynthesis; gluconeogenesis. Its pathway is carbohydrate degradation; glycolysis; D-glyceraldehyde 3-phosphate and glycerone phosphate from D-glucose: step 2/4. In terms of biological role, catalyzes the reversible isomerization of glucose-6-phosphate to fructose-6-phosphate. The sequence is that of Glucose-6-phosphate isomerase from Nostoc sp. (strain PCC 7120 / SAG 25.82 / UTEX 2576).